We begin with the raw amino-acid sequence, 239 residues long: Purine nucleoside phosphorylase DeoD-type (239 aa).

A purine D-ribonucleoside is bound at residue H5. Phosphate is bound by residues G21, R25, R44, and 88–91 (RVGS). A purine D-ribonucleoside-binding positions include 180-182 (EME) and 204-205 (SD). D205 (proton donor) is an active-site residue.

It belongs to the PNP/UDP phosphorylase family. Homohexamer; trimer of homodimers.

It catalyses the reaction a purine D-ribonucleoside + phosphate = a purine nucleobase + alpha-D-ribose 1-phosphate. The catalysed reaction is a purine 2'-deoxy-D-ribonucleoside + phosphate = a purine nucleobase + 2-deoxy-alpha-D-ribose 1-phosphate. Functionally, catalyzes the reversible phosphorolytic breakdown of the N-glycosidic bond in the beta-(deoxy)ribonucleoside molecules, with the formation of the corresponding free purine bases and pentose-1-phosphate. This is Purine nucleoside phosphorylase DeoD-type from Pectobacterium atrosepticum (strain SCRI 1043 / ATCC BAA-672) (Erwinia carotovora subsp. atroseptica).